A 128-amino-acid chain; its full sequence is RutC family protein BU371 (128 aa).

Belongs to the RutC family.

The sequence is that of RutC family protein BU371 from Buchnera aphidicola subsp. Acyrthosiphon pisum (strain APS) (Acyrthosiphon pisum symbiotic bacterium).